We begin with the raw amino-acid sequence, 361 residues long: Cysteine-rich with EGF-like domain protein 2-B (361 aa).

The signal sequence occupies residues 1–24 (MNGSRAWRLAAWLLLCLSCSAAVA). The region spanning 134-176 (DCLACLGGSERPCHGNGFCSGDGTRSGDGSCRCKAEYTGSFCL) is the EGF-like 1 domain. Intrachain disulfides connect C138–C152, C146–C164, and C166–C175. Residue N188 is glycosylated (N-linked (GlcNAc...) asparagine). FU repeat units lie at residues 191–238 (HAVC…EESP) and 251–298 (SFLC…SEKL). Residues 288 to 329 (DVDECDASEKLCLRENEVCLNTAGSYKCTCSEGFEDKEGNCV) form the EGF-like 2; calcium-binding domain. 3 disulfide bridges follow: C292/C306, C299/C315, and C317/C328. Positions 339 to 361 (ITEGETGTPASDTNILNTAHEDL) are disordered. The segment covering 346–355 (TPASDTNILN) has biased composition (polar residues).

The protein belongs to the CRELD family.

Its subcellular location is the secreted. The protein resides in the endoplasmic reticulum. Possible role in neuronal acetylcholine receptor transport. In Xenopus laevis (African clawed frog), this protein is Cysteine-rich with EGF-like domain protein 2-B (creld2-b).